Consider the following 66-residue polypeptide: MGQKTALGSLLKAIGNSGQGKVVPGWGAVPVMTVIGLLLLVFLVILLQIYNQSLLLQGFSVDWNGN.

Residues 27-47 (GAVPVMTVIGLLLLVFLVILL) form a helical membrane-spanning segment.

It belongs to the PsbH family. PSII is composed of 1 copy each of membrane proteins PsbA, PsbB, PsbC, PsbD, PsbE, PsbF, PsbH, PsbI, PsbJ, PsbK, PsbL, PsbM, PsbT, PsbX, PsbY, Psb30/Ycf12, peripheral proteins PsbO, CyanoQ (PsbQ), PsbU, PsbV and a large number of cofactors. It forms dimeric complexes.

It localises to the cellular thylakoid membrane. Functionally, one of the components of the core complex of photosystem II (PSII), required for its stability and/or assembly. PSII is a light-driven water:plastoquinone oxidoreductase that uses light energy to abstract electrons from H(2)O, generating O(2) and a proton gradient subsequently used for ATP formation. It consists of a core antenna complex that captures photons, and an electron transfer chain that converts photonic excitation into a charge separation. The sequence is that of Photosystem II reaction center protein H from Prochlorococcus marinus (strain MIT 9215).